Here is a 182-residue protein sequence, read N- to C-terminus: uncharacterized protein (182 aa).

2 consecutive transmembrane segments (helical) span residues 76 to 96 (LLLA…LALA) and 114 to 130 (LDLL…LIGA).

It is found in the membrane. This is an uncharacterized protein from Saccharomyces cerevisiae (strain ATCC 204508 / S288c) (Baker's yeast).